The chain runs to 67 residues: Light-harvesting protein B-870 alpha chain (67 aa).

At 1-12 (MWRIWRLFDPMR) the chain is on the cytoplasmic side. The helical transmembrane segment at 13-33 (AMVAQAVFLLGLAVLIHLMLL) threads the bilayer. H29 provides a ligand contact to a bacteriochlorophyll. The Periplasmic portion of the chain corresponds to 34–67 (GTNKYNWLDGAKKAPVATAVAPVPAEVTSLAQAK).

It belongs to the antenna complex alpha subunit family. As to quaternary structure, an alpha/beta heterodimer. The core complex is formed by different alpha and beta chains, binding bacteriochlorophyll molecules, and arranged most probably in tetrameric structures disposed around the reaction center. The non-pigmented gamma chains may constitute additional components.

It localises to the cell inner membrane. Its function is as follows. Antenna complexes are light-harvesting systems, which transfer the excitation energy to the reaction centers. The sequence is that of Light-harvesting protein B-870 alpha chain (pufA) from Rubrivivax gelatinosus (strain NBRC 100245 / IL144).